A 443-amino-acid polypeptide reads, in one-letter code: MLSKTNQNIFTVSRLNAEVRLLLENEMGIVWLVGEISNFSAPVSGHWYLTLKDSRAQVKCAMFRGNNRRVTFKPANGNQVLVKARLSLYEPRGDYQLIIESMQPEGDGRLQQEFEELKMKLAAEGLFAQTNKLPLPEHPKRVGIITSKTGAALYDILDVLKRRDPSLPVVIYPTMVQGDDAAIQIAQAIGRANSRNECDVLIVGRGGGSLEDLWCFNNEILARTIAASQIPIISAVGHEVDMTIADFVADVRAPTPSAAAELVSRDNSHKDQSLVAKQHKLASAMRYYLSQQKQQSAQLLHRLERQHPSYQLQRQSQQLDELDMRLRRAMQRFIDTRQQAVERKHHRLQLNSPVKHLAQQKSRLERVEHKLLDTMDRKLLTMRHQLAIAAEKLDTVSPLATLKRGYSITQTEQGKVVTSADDVKTGDLLVTRLANGEIHSTVS.

Belongs to the XseA family. As to quaternary structure, heterooligomer composed of large and small subunits.

The protein resides in the cytoplasm. It catalyses the reaction Exonucleolytic cleavage in either 5'- to 3'- or 3'- to 5'-direction to yield nucleoside 5'-phosphates.. In terms of biological role, bidirectionally degrades single-stranded DNA into large acid-insoluble oligonucleotides, which are then degraded further into small acid-soluble oligonucleotides. The sequence is that of Exodeoxyribonuclease 7 large subunit from Vibrio parahaemolyticus serotype O3:K6 (strain RIMD 2210633).